A 276-amino-acid chain; its full sequence is UPF0328 protein ECU01_0090/ECU01_1520/ECU02_1550/ECU08_0020 (276 aa).

Positions 1-24 are disordered; the sequence is MGIIDVQRSHLTATPSKERDAPAH.

Belongs to the UPF0328 family.

The sequence is that of UPF0328 protein ECU01_0090/ECU01_1520/ECU02_1550/ECU08_0020 from Encephalitozoon cuniculi (strain GB-M1) (Microsporidian parasite).